Reading from the N-terminus, the 162-residue chain is Large ribosomal subunit protein uL10 (162 aa).

It belongs to the universal ribosomal protein uL10 family. In terms of assembly, part of the ribosomal stalk of the 50S ribosomal subunit. The N-terminus interacts with L11 and the large rRNA to form the base of the stalk. The C-terminus forms an elongated spine to which L12 dimers bind in a sequential fashion forming a multimeric L10(L12)X complex.

Its function is as follows. Forms part of the ribosomal stalk, playing a central role in the interaction of the ribosome with GTP-bound translation factors. This Aliarcobacter butzleri (strain RM4018) (Arcobacter butzleri) protein is Large ribosomal subunit protein uL10.